Reading from the N-terminus, the 435-residue chain is Monodehydroascorbate reductase 4, cytosolic (435 aa).

FAD is bound by residues 14-17 (GGVA), Glu-41, Arg-48, Lys-53, Ile-96, and 147-148 (RD). Residues 172 to 178 (GGYIGLE), Glu-196, Arg-202, and Gly-261 contribute to the NAD(+) site. 174–178 (YIGLE) is an NADP(+) binding site. Residues Arg-202 and Gly-261 each contribute to the NADP(+) site. Asp-298 contributes to the FAD binding site. Position 314–315 (314–315 (EH)) interacts with NAD(+). Position 314–315 (314–315 (EH)) interacts with NADP(+). Val-316 is an FAD binding site. Arg-320 is an L-ascorbate binding site. Tyr-349 contacts FAD. Tyr-349 contributes to the NAD(+) binding site. An NADP(+)-binding site is contributed by Tyr-349. Residue Arg-351 participates in L-ascorbate binding.

Belongs to the FAD-dependent oxidoreductase family. FAD serves as cofactor. Expressed in anthers.

Its subcellular location is the cytoplasm. The enzyme catalyses 2 monodehydro-L-ascorbate radical + NADH + H(+) = 2 L-ascorbate + NAD(+). Functionally, catalyzes the conversion of monodehydroascorbate to ascorbate, oxidizing NADH in the process. Ascorbate is a major antioxidant against reactive oxygen species (ROS) and nitric oxide (NO). The polypeptide is Monodehydroascorbate reductase 4, cytosolic (Oryza sativa subsp. japonica (Rice)).